A 328-amino-acid polypeptide reads, in one-letter code: Cytochrome c biogenesis protein CcsA (328 aa).

Transmembrane regions (helical) follow at residues 15–35 (FLVL…PSVP), 37–57 (LQAL…ALLG), 68–88 (ISNL…AHLI), 97–117 (LVGV…ALTL), 142–162 (VMML…AFLF), 236–256 (IIGL…VWAN), 271–291 (WALI…TKGW), and 297–317 (AILA…VNLL).

It belongs to the CcmF/CycK/Ccl1/NrfE/CcsA family. As to quaternary structure, may interact with ccs1.

Its subcellular location is the cellular thylakoid membrane. Its function is as follows. Required during biogenesis of c-type cytochromes (cytochrome c6 and cytochrome f) at the step of heme attachment. In Gloeothece citriformis (strain PCC 7424) (Cyanothece sp. (strain PCC 7424)), this protein is Cytochrome c biogenesis protein CcsA.